The chain runs to 398 residues: Inner membrane protein YjgN (398 aa).

The Cytoplasmic segment spans residues 1 to 24 (MAQVINEMDVPSHSFVFHGTGERY). Residues 25-45 (FLICVVNVLLTIITLGIYLPW) traverse the membrane as a helical segment. Topologically, residues 46-73 (ALMKCKRYLYANMEVNGQRFSYGITGGN) are periplasmic. Residues 74 to 94 (VFFSCLVFVFFYFAILMTVSA) form a helical membrane-spanning segment. Position 95 (D95) is a topological domain, cytoplasmic. A helical membrane pass occupies residues 96–116 (MPLIGCVLTLSLLVLLIFMAA). Topologically, residues 117–142 (KGLRYQALMTSLNGVRFSFNCSMKGV) are periplasmic. Residues 143-163 (WWVTFFLPILMAIGMGTVFFI) form a helical membrane-spanning segment. Over 164-175 (STKMLHANSSSS) the chain is Cytoplasmic. The chain crosses the membrane as a helical span at residues 176-196 (VIVSVVLMAIVGIVSIGIFNG). Residues 197 to 228 (TLYSLVMSFLWSNTSFGIHRFKVKLDTAYCIK) are Periplasmic-facing. A helical transmembrane segment spans residues 229–249 (YAILAFLALLPFLAVAGYIIF). Residues 250–278 (DQILNAYDSSVYANDDIENLQQFMEMQRK) lie on the Cytoplasmic side of the membrane. A helical membrane pass occupies residues 279–299 (MIIAQLIYYFGIAVSTSYLTV). At 300–333 (SLRNHFMSNLSLNDGRIRFRSTLTYHGMLYRMCA) the chain is on the periplasmic side. Residues 334 to 354 (LVVISGITGGLAYPLLKIWMI) form a helical membrane-spanning segment. Residues 355-398 (DWQAKNTYLLGDLDDLPLINKEEQPDKGFLASISRGIMPSLPFL) lie on the Cytoplasmic side of the membrane.

Its subcellular location is the cell inner membrane. The chain is Inner membrane protein YjgN (yjgN) from Escherichia coli O157:H7.